The following is a 445-amino-acid chain: C-terminal-binding protein 2 (445 aa).

Arg22 carries the asymmetric dimethylarginine modification. Residues Ser106, 186–191 (IGFGRT), Asp210, 243–249 (CNLNEHN), 270–272 (AAR), and Asp296 contribute to the NAD(+) site. Residue Arg272 is part of the active site. Glu301 is a catalytic residue. His321 serves as the catalytic Proton donor. 321-324 (HTAW) contributes to the NAD(+) binding site. The interval 414 to 445 (THNLPTVAHPSQAPSPNQPTKHGDNREHPNEQ) is disordered. Ser428 is modified (phosphoserine; by HIPK2). The segment covering 434-445 (KHGDNREHPNEQ) has biased composition (basic and acidic residues).

This sequence belongs to the D-isomer specific 2-hydroxyacid dehydrogenase family. In terms of assembly, interacts with HIPK2 and PNN. Interacts with the transcription factors ZNF217, BKLF, delta EF1/AREB6/ZEB, EVI-1 and Friend of GATA (FOG) via the consensus motif P-X-[DNS]-L-[STVA]. Also interacts with the C-terminus of adenovirus E1A protein. Can form a complex with BKLF on a CACCC-box oligonucleotide. Can form homodimers or heterodimers of CTBP1 and CTBP2. Interacts with NRIP1 and WIZ. Interacts with PRDM16; represses white adipose tissue (WAT)-specific genes expression. Interacts with MCRIP1. In terms of processing, phosphorylation by HIPK2 on Ser-428 induces proteasomal degradation. In terms of tissue distribution, found in all tissues except spleen and liver.

It is found in the nucleus. Its subcellular location is the synapse. In terms of biological role, corepressor targeting diverse transcription regulators. Isoform 2 probably acts as a scaffold for specialized synapses. Functions in brown adipose tissue (BAT) differentiation. This Mus musculus (Mouse) protein is C-terminal-binding protein 2 (Ctbp2).